Consider the following 195-residue polypeptide: Peptidyl-tRNA hydrolase (195 aa).

Y18 is a binding site for tRNA. The active-site Proton acceptor is the H23. Residues Y69, N71, and N117 each coordinate tRNA.

It belongs to the PTH family. In terms of assembly, monomer.

Its subcellular location is the cytoplasm. The catalysed reaction is an N-acyl-L-alpha-aminoacyl-tRNA + H2O = an N-acyl-L-amino acid + a tRNA + H(+). Its function is as follows. Hydrolyzes ribosome-free peptidyl-tRNAs (with 1 or more amino acids incorporated), which drop off the ribosome during protein synthesis, or as a result of ribosome stalling. In terms of biological role, catalyzes the release of premature peptidyl moieties from peptidyl-tRNA molecules trapped in stalled 50S ribosomal subunits, and thus maintains levels of free tRNAs and 50S ribosomes. The chain is Peptidyl-tRNA hydrolase from Nitrosomonas eutropha (strain DSM 101675 / C91 / Nm57).